We begin with the raw amino-acid sequence, 45 residues long: Large ribosomal subunit protein bL34 (45 aa).

Positions 23–45 (ETPGGKKVLSARRAKGRKNLIAK) are disordered. Positions 31–45 (LSARRAKGRKNLIAK) are enriched in basic residues.

This sequence belongs to the bacterial ribosomal protein bL34 family.

The sequence is that of Large ribosomal subunit protein bL34 from Elusimicrobium minutum (strain Pei191).